The following is a 479-amino-acid chain: Proline--tRNA ligase (479 aa).

It belongs to the class-II aminoacyl-tRNA synthetase family. ProS type 3 subfamily. In terms of assembly, homodimer.

Its subcellular location is the cytoplasm. The catalysed reaction is tRNA(Pro) + L-proline + ATP = L-prolyl-tRNA(Pro) + AMP + diphosphate. In terms of biological role, catalyzes the attachment of proline to tRNA(Pro) in a two-step reaction: proline is first activated by ATP to form Pro-AMP and then transferred to the acceptor end of tRNA(Pro). This is Proline--tRNA ligase from Mesomycoplasma hyopneumoniae (strain 7448) (Mycoplasma hyopneumoniae).